Reading from the N-terminus, the 312-residue chain is Glyoxylate/hydroxypyruvate reductase A (312 aa).

R227 is an active-site residue. H275 acts as the Proton donor in catalysis.

It belongs to the D-isomer specific 2-hydroxyacid dehydrogenase family. GhrA subfamily.

The protein localises to the cytoplasm. It carries out the reaction glycolate + NADP(+) = glyoxylate + NADPH + H(+). The catalysed reaction is (R)-glycerate + NAD(+) = 3-hydroxypyruvate + NADH + H(+). It catalyses the reaction (R)-glycerate + NADP(+) = 3-hydroxypyruvate + NADPH + H(+). Functionally, catalyzes the NADPH-dependent reduction of glyoxylate and hydroxypyruvate into glycolate and glycerate, respectively. The chain is Glyoxylate/hydroxypyruvate reductase A from Salmonella paratyphi B (strain ATCC BAA-1250 / SPB7).